Consider the following 421-residue polypeptide: MKQMIIHGGKPLKGDVWIGGAKNSTVALIPASILSRTPVTLEGVPRIADVDNLMDLLSEMDVKCDFHETTLRINPDNIKRSPLPAGKIKSLRASYYFMGALLGRFGKAVVGFPGGDDIGPRPIDQHIKGFEALGATVENKNDQIIITAPKTGLRGAKIHLKMPSVGATMNIIMASVMAKGQTIIENAAKEPEIIDLATFLNNMGAVIRGAGTEVIRIEGVEELKAQTPHTIIPDRIEAGTYVALAACIGNGIRIHNIIEEHLDSYLAKVEEMGVVIDADEDSLYVYPAGDLKMIQVRTDVYPGFATDLQQPITPLLLTAKSGEGVVIDQIYPKRVGHIPELQKMGANIQVEDNIILVHPTHHLHGAHVSAGEIRAGACLMLAGLMADGETIISNAGNILRGYDRIEQKLRQLGAEVSVIDV.

22–23 (KN) provides a ligand contact to phosphoenolpyruvate. A UDP-N-acetyl-alpha-D-glucosamine-binding site is contributed by arginine 92. The Proton donor role is filled by aspartate 116. UDP-N-acetyl-alpha-D-glucosamine contacts are provided by residues 121–125 (RPIDQ), aspartate 307, and isoleucine 330.

The protein belongs to the EPSP synthase family. MurA subfamily.

It is found in the cytoplasm. It catalyses the reaction phosphoenolpyruvate + UDP-N-acetyl-alpha-D-glucosamine = UDP-N-acetyl-3-O-(1-carboxyvinyl)-alpha-D-glucosamine + phosphate. It functions in the pathway cell wall biogenesis; peptidoglycan biosynthesis. Functionally, cell wall formation. Adds enolpyruvyl to UDP-N-acetylglucosamine. The polypeptide is UDP-N-acetylglucosamine 1-carboxyvinyltransferase (Lactobacillus johnsonii (strain CNCM I-12250 / La1 / NCC 533)).